Consider the following 511-residue polypeptide: MTTHNDDAAAALPQDENKIIAERRAKLSALREQGIAFPNDFRPQHKAADLHEKYDGKTREELEAEPVTVTLAGRMMLKREAGKKAAFATLQDASGAKADGRIQIYATLDLTGEAAMAALHHYDLGDILGVVGTLFKTKTDELTIKVTELRLLTKSLRPLPDKFHGLADQETKYRQRYVDLIMNEDTRRTFKARTAAISSIRRFMAENDFMEVETPMLHTIPGGAAAKPFVTHHNALDMEMFLRIAPELYLKRLVVGGFDRVFEINRNFRNEGVSIRHNPEFTMMEFYAAYTDYKWLMDFTEAVIRQAAIDAHGTATLTYGGRELDLAKPFHRLTIVGAINKYAPQYTNEQLHDAEFIKAELKKFGVKPHAHSGLGALQLALFEETAEAQLWEPTYIIDYPVEVSPLARASDTVAGITERFELFMVGREIANGFSELNDAEDQAARFQAQVAAKDAGDEEAMYYDADYIRALEYGMPPTGGCGIGIDRLMMIITDSPNIRDVLLFPHLRRED.

2 residues coordinate Mg(2+): Glu-421 and Glu-428.

Belongs to the class-II aminoacyl-tRNA synthetase family. Homodimer. Mg(2+) serves as cofactor.

It localises to the cytoplasm. The enzyme catalyses tRNA(Lys) + L-lysine + ATP = L-lysyl-tRNA(Lys) + AMP + diphosphate. This chain is Lysine--tRNA ligase, found in Janthinobacterium sp. (strain Marseille) (Minibacterium massiliensis).